Consider the following 552-residue polypeptide: Gamma-aminobutyric acid receptor subunit alpha-4 (552 aa).

The N-terminal stretch at 1-35 is a signal peptide; the sequence is MVSVQKVPAIALCSGVSLALLHFLCLAACLNESPG. Residues 36–259 lie on the Extracellular side of the membrane; it reads QNSKDEKLCP…FHLRRKMGYF (224 aa). Asn-47 carries an N-linked (GlcNAc...) asparagine glycan. Residue Arg-100 coordinates 4-aminobutanoate. Asn-144 and Asn-157 each carry an N-linked (GlcNAc...) asparagine glycan. Residue Thr-163 participates in 4-aminobutanoate binding. A disulfide bond links Cys-172 and Cys-186. Residues 260–280 traverse the membrane as a helical segment; that stretch reads MIQTYIPCIMTVILSQVSFWI. The Cytoplasmic segment spans residues 281–284; it reads NKES. A helical membrane pass occupies residues 285–305; it reads VPARTVFGITTVLTMTTLSIS. The Extracellular segment spans residues 306 to 318; sequence ARHSLPKVSYATA. The chain crosses the membrane as a helical span at residues 319–341; sequence MDWFIAVCFAFVFSALIEFAAVN. Residues 342 to 515 lie on the Cytoplasmic side of the membrane; it reads YFTNIQMQKA…PPPSGSGTSK (174 aa). 2 disordered regions span residues 353-480 and 492-513; these read KKIS…FGSR and GAAG…GSGT. Residues 396-406 are compositionally biased toward basic and acidic residues; that stretch reads SESDVKSRTEV. Polar residues predominate over residues 407 to 422; the sequence is GNHSSKTSAVQESSEA. A compositionally biased stretch (low complexity) spans 445–458; it reads SAAARGLSSAASPS. Positions 500–509 are enriched in pro residues; that stretch reads TPPPPAPPPS. Residues 516-538 traverse the membrane as a helical segment; it reads IDKYARILFPVTFGAFNMVYWVV. Topologically, residues 539 to 552 are extracellular; sequence YLSKDTMEKSESLM.

It belongs to the ligand-gated ion channel (TC 1.A.9) family. Gamma-aminobutyric acid receptor (TC 1.A.9.5) subfamily. GABRA4 sub-subfamily. As to quaternary structure, heteropentamer, formed by a combination of alpha (GABRA1-6), beta (GABRB1-3), gamma (GABRG1-3), delta (GABRD), epsilon (GABRE), rho (GABRR1-3), pi (GABRP) and theta (GABRQ) chains, each subunit exhibiting distinct physiological and pharmacological properties. As to expression, expressed in the brain.

The protein localises to the cell membrane. Its subcellular location is the postsynaptic cell membrane. The catalysed reaction is chloride(in) = chloride(out). Potentiated by gaboxadol. Potentiated by histamine. Functionally, alpha subunit of the heteropentameric ligand-gated chloride channel gated by gamma-aminobutyric acid (GABA), a major inhibitory neurotransmitter in the brain. GABA-gated chloride channels, also named GABA(A) receptors (GABAAR), consist of five subunits arranged around a central pore and contain GABA active binding site(s) located at the alpha and beta subunit interface(s). Alpha-4/GABRA4 subunit often assembles with delta or gamma-2 subunits, in combination with beta subunits. When activated by GABA, GABAARs selectively allow the flow of chloride anions across the cell membrane down their electrochemical gradient. GABAARs containing alpha-4 are predominantly extrasynaptic, contributing to tonic inhibition in dentate granule cells and thalamic relay neurons. Extrasynaptic alpha-4-containing GABAARs control levels of excitability and network activity. GABAAR containing alpha-4-beta-3-delta subunits can simultaneously bind GABA and histamine where histamine binds at the interface of two neighboring beta subunits, which may be involved in the regulation of sleep and wakefulness. The polypeptide is Gamma-aminobutyric acid receptor subunit alpha-4 (Mus musculus (Mouse)).